The chain runs to 212 residues: Ribosomal RNA small subunit methyltransferase G (212 aa).

S-adenosyl-L-methionine-binding positions include glycine 80, leucine 85, 131-132 (AE), and arginine 146.

The protein belongs to the methyltransferase superfamily. RNA methyltransferase RsmG family.

Its subcellular location is the cytoplasm. It carries out the reaction guanosine(527) in 16S rRNA + S-adenosyl-L-methionine = N(7)-methylguanosine(527) in 16S rRNA + S-adenosyl-L-homocysteine. Its function is as follows. Specifically methylates the N7 position of guanine in position 527 of 16S rRNA. The protein is Ribosomal RNA small subunit methyltransferase G of Xanthomonas euvesicatoria pv. vesicatoria (strain 85-10) (Xanthomonas campestris pv. vesicatoria).